A 405-amino-acid polypeptide reads, in one-letter code: Phosphoglycerate kinase (405 aa).

Residues 24–26, R40, 63–66, R122, and R162 contribute to the substrate site; these read DFN and HLGR. Residues K212, E331, and 361–364 each bind ATP; that span reads GGDS.

Belongs to the phosphoglycerate kinase family. As to quaternary structure, monomer.

The protein resides in the cytoplasm. It catalyses the reaction (2R)-3-phosphoglycerate + ATP = (2R)-3-phospho-glyceroyl phosphate + ADP. It functions in the pathway carbohydrate degradation; glycolysis; pyruvate from D-glyceraldehyde 3-phosphate: step 2/5. In Corynebacterium efficiens (strain DSM 44549 / YS-314 / AJ 12310 / JCM 11189 / NBRC 100395), this protein is Phosphoglycerate kinase.